Here is a 359-residue protein sequence, read N- to C-terminus: 4-galactosyl-N-acetylglucosaminide 3-alpha-L-fucosyltransferase 9 (359 aa).

The Cytoplasmic segment spans residues 1-11; it reads MTSTSKGILRP. A helical; Signal-anchor for type II membrane protein transmembrane segment spans residues 12-32; the sequence is FLIVCIILGCFMACLLIYIKP. At 33 to 359 the chain is on the lumenal side; it reads TNSWVFSPME…VGNLEKWFWN (327 aa). Asparagine 62 carries an N-linked (GlcNAc...) asparagine glycan. An acceptor-binding region spans residues 63–168; that stretch reads ETTILVWVWP…RRDSDIQVPY (106 aa). Glutamine 75 contributes to the a beta-D-galactosyl-(1-&gt;4)-N-acetyl-beta-D-glucosaminyl derivative binding site. 3 cysteine pairs are disulfide-bonded: cysteine 82-cysteine 335, cysteine 91-cysteine 338, and cysteine 190-cysteine 238. Asparagine 101 carries N-linked (GlcNAc...) asparagine glycosylation. Glutamate 137 provides a ligand contact to a beta-D-galactosyl-(1-&gt;4)-N-acetyl-beta-D-glucosaminyl derivative. The Nucleophile role is filled by glutamate 137. A GDP-beta-L-fucose-binding site is contributed by glutamate 137. An N-linked (GlcNAc...) asparagine glycan is attached at asparagine 153. The GDP-beta-L-fucose site is built by tyrosine 168, valine 192, serine 194, asparagine 195, arginine 202, valine 226, tyrosine 241, asparagine 246, tyrosine 252, glutamate 255, and lysine 256. A donor-binding region spans residues 169-326; sequence GFLTVSTNPF…NWRKDFTVNL (158 aa). Residues 327–359 form an acceptor-binding region; sequence PRFWESHACLACDHVKRHQEYKSVGNLEKWFWN.

Belongs to the glycosyltransferase 10 family. In terms of assembly, homodimer. Post-translationally, N-glycosylated with complex-type N-glycans. In terms of tissue distribution, mainly detected in brain and kidney.

It is found in the golgi apparatus. The protein localises to the trans-Golgi network membrane. It localises to the golgi apparatus membrane. It carries out the reaction a beta-D-galactosyl-(1-&gt;4)-N-acetyl-beta-D-glucosaminyl derivative + GDP-beta-L-fucose = a beta-D-galactosyl-(1-&gt;4)-[alpha-L-fucosyl-(1-&gt;3)]-N-acetyl-beta-D-glucosaminyl derivative + GDP + H(+). The catalysed reaction is an alpha-Neu5Ac-(2-&gt;3)-beta-D-Gal-(1-&gt;4)-beta-D-GlcNAc-(1-&gt;3)-beta-D-Gal-(1-&gt;4)-beta-D-GlcNAc derivative + GDP-beta-L-fucose = an alpha-Neu5Ac-(2-&gt;3)-beta-D-Gal-(1-&gt;4)-beta-D-GlcNAc-(1-&gt;3)-beta-D-Gal-(1-&gt;4)-[alpha-L-Fuc-(1-&gt;3)]-beta-D-GlcNAc derivative + GDP + H(+). The enzyme catalyses alpha-N-glycoloylneuraminosyl-(2-&gt;3)-beta-D-galactosyl-(1-&gt;4)-N-acetyl-beta-D-glucosaminyl-(1-&gt;3)-beta-D-galactosyl-(1-&gt;4)-N-acetyl-beta-D-glucosaminyl-(1-&gt;3)-beta-D-galactosyl-(1-&gt;4)-beta-D-glucosyl-(1&lt;-&gt;1')-ceramide + GDP-beta-L-fucose = alpha-N-glycoloylneuraminosyl-(2-&gt;3)-beta-D-galactosyl-(1-&gt;4)-N-acetyl-beta-D-glucosaminyl-(1-&gt;3)-beta-D-galactosyl-(1-&gt;4)-[alpha-L-fucosyl-(1-&gt;3)]-N-acetyl-beta-D-glucosaminyl-(1-&gt;3)-beta-D-galactosyl-(1-&gt;4)-beta-D-glucosyl-(1&lt;-&gt;1')-ceramide + GDP + H(+). It catalyses the reaction alpha-D-galactosyl-(1-&gt;3)-beta-D-galactosyl-(1-&gt;4)-N-acetyl-beta-D-glucosaminyl-(1-&gt;3)-beta-D-galactosyl-(1-&gt;4)-beta-D-glucosyl-(1&lt;-&gt;1')-ceramide + GDP-beta-L-fucose = a neolactoside IV(3)-alpha-Gal,III(3)-alpha-Fuc-nLc4Cer + GDP + H(+). It carries out the reaction a neolactoside nLc4Cer + GDP-beta-L-fucose = a neolactoside III(3)-alpha-Fuc-nLc4Cer + GDP + H(+). The catalysed reaction is an N-acetyl-alpha-neuraminyl-(2-&gt;3)-beta-D-galactosyl-(1-&gt;4)-N-acetyl-beta-D-glucosaminyl derivative + GDP-beta-L-fucose = an alpha-Neu5Ac-(2-&gt;3)-beta-D-Gal-(1-&gt;4)-[alpha-L-Fuc-(1-&gt;3)]-beta-D-GlcNAc derivative + GDP + H(+). The enzyme catalyses beta-D-Gal-(1-&gt;4)-beta-D-GlcNAc-(1-&gt;3)-beta-D-Gal-(1-&gt;4)-D-Glc + GDP-beta-L-fucose = beta-D-Gal-(1-&gt;4)-[alpha-L-Fuc-(1-&gt;3)]-beta-D-GlcNAc-(1-&gt;3)-beta-D-Gal-(1-&gt;4)-D-Glc + GDP + H(+). It catalyses the reaction an alpha-L-Fuc-(1-&gt;2)-beta-D-Gal-(1-&gt;4)-beta-D-GlcNAc derivative + GDP-beta-L-fucose = an alpha-L-Fuc-(1-&gt;2)-beta-D-Gal-(1-&gt;4)-[alpha-L-Fuc-(1-&gt;3)]-beta-D-GlcNAc derivative + GDP + H(+). The protein operates within protein modification; protein glycosylation. It participates in glycolipid biosynthesis. Its activity is regulated as follows. Activated by Mn2+. Its function is as follows. Catalyzes alpha(1-&gt;3) linkage of fucosyl moiety transferred from GDP-beta-L-fucose to N-acetyl glucosamine (GlcNAc) within type 2 lactosamine (LacNAc, beta-D-Gal-(1-&gt;4)-beta-D-GlcNAc-) glycan attached to glycolipids and N- or O-linked glycoproteins. Fucosylates distal type 2 LacNAc and its fucosylated (H-type 2 LacNAc) and sialylated (sialyl-type 2 LacNAc) derivatives to form Lewis x (Lex) (CD15) and Lewis y (Ley) antigenic epitopes involved in cell adhesion and differentiation. Generates Lex epitopes in the brain, presumably playing a role in the maintenance of neuronal stemness and neurite outgrowth in progenitor neural cells. Fucosylates the internal type 2 LacNAc unit of the polylactosamine chain to form VIM-2 antigen that serves as recognition epitope for SELE. Can also modify milk oligosaccharides in particular type 2 tetrasaccharide LNnT. This Mus musculus (Mouse) protein is 4-galactosyl-N-acetylglucosaminide 3-alpha-L-fucosyltransferase 9.